The chain runs to 30 residues: Snaclec coagulation factor IX/factor X-binding protein subunit A (30 aa).

In terms of domain architecture, C-type lectin spans 1–30 (DCPSDWSPYEGHCYKHFIKWMNNEDAERFC). A disulfide bridge connects residues cysteine 2 and cysteine 13.

It belongs to the snaclec family. Heterodimer of subunits A and B; disulfide-linked. In terms of tissue distribution, expressed by the venom gland.

The protein resides in the secreted. In terms of biological role, anticoagulant protein which binds to the gamma-carboxyglutamic acid-domain regions of factors IX (F9) and factor X (F10) in the presence of calcium with a 1 to 1 stoichiometry. The polypeptide is Snaclec coagulation factor IX/factor X-binding protein subunit A (Bothrops jararaca (Jararaca)).